Consider the following 133-residue polypeptide: MMTDPIADMLTRIRNAVRVERPFVDIPASRVKRGLADVLKREGFIWDWKEEKLEEEPVGYLRLELKYGPNGERVIQSIRRISKPGRRLYSRSKELKPVLGGLGIRIISTSKGVISDREARRDKIGGEVLCEVS.

It belongs to the universal ribosomal protein uS8 family. As to quaternary structure, part of the 30S ribosomal subunit. Contacts proteins S5 and S12.

Its function is as follows. One of the primary rRNA binding proteins, it binds directly to 16S rRNA central domain where it helps coordinate assembly of the platform of the 30S subunit. This chain is Small ribosomal subunit protein uS8, found in Rhodopirellula baltica (strain DSM 10527 / NCIMB 13988 / SH1).